The sequence spans 924 residues: Protein translocase subunit SecA (924 aa).

ATP-binding positions include Gln87, 105 to 109 (GEGKT), and Asp517. Positions 886–906 (VPAADRDPNDPSTWGKVGRNE) are disordered. 4 residues coordinate Zn(2+): Cys908, Cys910, Cys919, and His920.

The protein belongs to the SecA family. As to quaternary structure, monomer and homodimer. Part of the essential Sec protein translocation apparatus which comprises SecA, SecYEG and auxiliary proteins SecDF-YajC and YidC. It depends on Zn(2+) as a cofactor.

It localises to the cell inner membrane. The protein localises to the cytoplasm. The catalysed reaction is ATP + H2O + cellular proteinSide 1 = ADP + phosphate + cellular proteinSide 2.. Functionally, part of the Sec protein translocase complex. Interacts with the SecYEG preprotein conducting channel. Has a central role in coupling the hydrolysis of ATP to the transfer of proteins into and across the cell membrane, serving both as a receptor for the preprotein-SecB complex and as an ATP-driven molecular motor driving the stepwise translocation of polypeptide chains across the membrane. The chain is Protein translocase subunit SecA from Azorhizobium caulinodans (strain ATCC 43989 / DSM 5975 / JCM 20966 / LMG 6465 / NBRC 14845 / NCIMB 13405 / ORS 571).